The sequence spans 512 residues: Choline-sulfatase (512 aa).

Ca(2+) contacts are provided by Asp-14, Gln-15, and Cys-54. Cys-54 functions as the Nucleophile in the catalytic mechanism. At Cys-54 the chain carries 3-oxoalanine (Cys). The active site involves His-104. Ca(2+)-binding residues include Asp-296 and His-297.

This sequence belongs to the sulfatase family. The cofactor is Ca(2+). Post-translationally, the conversion to 3-oxoalanine (also known as C-formylglycine, FGly), of a serine or cysteine residue in prokaryotes and of a cysteine residue in eukaryotes, is critical for catalytic activity.

The catalysed reaction is choline sulfate + H2O = choline + sulfate + H(+). It functions in the pathway amine and polyamine biosynthesis; choline biosynthesis; choline from choline sulfate: step 1/1. Functionally, converts choline-O-sulfate into choline. In Rhizobium meliloti (strain 1021) (Ensifer meliloti), this protein is Choline-sulfatase (betC).